The primary structure comprises 696 residues: Ribonucleoside-diphosphate reductase subunit beta (696 aa).

The Fe cation site is built by Asp97, Glu127, and His130. Tyr134 is an active-site residue. Fe cation contacts are provided by Glu194 and Glu228. Residues 377-507 (DGTIDSKRNG…FVQALCALGG (131 aa)) form the DOD-type homing endonuclease domain. His577 provides a ligand contact to Fe cation.

Belongs to the ribonucleoside diphosphate reductase small chain family. In terms of assembly, tetramer of two alpha and two beta subunits. Fe cation serves as cofactor. Post-translationally, this protein undergoes a protein self splicing that involves a post-translational excision of the intervening region (intein) followed by peptide ligation.

The catalysed reaction is a 2'-deoxyribonucleoside 5'-diphosphate + [thioredoxin]-disulfide + H2O = a ribonucleoside 5'-diphosphate + [thioredoxin]-dithiol. Its function is as follows. Provides the precursors necessary for DNA synthesis. Catalyzes the biosynthesis of deoxyribonucleotides from the corresponding ribonucleotides. This chain is Ribonucleoside-diphosphate reductase subunit beta (nrdB), found in Aquifex aeolicus (strain VF5).